Reading from the N-terminus, the 241-residue chain is Pyridoxal phosphate phosphatase PHOSPHO2 (241 aa).

Aspartate 8 functions as the Nucleophile in the catalytic mechanism. 2 residues coordinate Mg(2+): aspartate 8 and aspartate 10. The active-site Proton donor is the aspartate 10. Substrate contacts are provided by aspartate 19 and aspartate 99. Residue aspartate 179 participates in Mg(2+) binding.

Belongs to the HAD-like hydrolase superfamily. PHOSPHO family. The cofactor is Mg(2+).

The catalysed reaction is pyridoxal 5'-phosphate + H2O = pyridoxal + phosphate. Its function is as follows. Phosphatase that has high activity toward pyridoxal 5'-phosphate (PLP). Also active at much lower level toward pyrophosphate, phosphoethanolamine (PEA), phosphocholine (PCho), phospho-l-tyrosine, fructose-6-phosphate, p-nitrophenyl phosphate, and h-glycerophosphate. This chain is Pyridoxal phosphate phosphatase PHOSPHO2 (Phospho2), found in Mus musculus (Mouse).